We begin with the raw amino-acid sequence, 568 residues long: Alpha-1,3-galactosidase A (568 aa).

An N-terminal signal peptide occupies residues 1 to 17 (MMSVWFIQLAIFAQSRI). 6 PbH1 repeats span residues 87 to 125 (LYLN…VLKN), 243 to 265 (SKGI…VCQY), 299 to 321 (RGMI…NIHG), 409 to 431 (TPEV…LITT), 432 to 454 (RRKS…FVAD), and 465 to 486 (VHDL…ISID).

The protein belongs to the glycosyl hydrolase 110 family. A subfamily.

It catalyses the reaction Hydrolysis of terminal, non-reducing branched (1-&gt;3)-alpha-D-galactosidic residues, producing free D-galactose.. The enzyme catalyses Hydrolysis of terminal, non-reducing alpha-D-galactose residues in alpha-D-galactosides, including galactose oligosaccharides, galactomannans and galactolipids.. In terms of biological role, alpha-galactosidase that specifically removes branched alpha-1,3-linked galactose residues present in blood group B antigens. Has no activity toward linear alpha-1,3-linked galactose residues. The chain is Alpha-1,3-galactosidase A (glaA) from Bacteroides thetaiotaomicron (strain ATCC 29148 / DSM 2079 / JCM 5827 / CCUG 10774 / NCTC 10582 / VPI-5482 / E50).